The chain runs to 220 residues: Fructose-6-phosphate aldolase 1 (220 aa).

The active-site Schiff-base intermediate with substrate is the lysine 85.

Belongs to the transaldolase family. Type 3A subfamily. As to quaternary structure, homodecamer. Five subunits are arranged as a pentamer, and two ring-like pentamers pack like a donut to form the decamer.

It is found in the cytoplasm. It carries out the reaction beta-D-fructose 6-phosphate = dihydroxyacetone + D-glyceraldehyde 3-phosphate. With respect to regulation, inhibited by glycerol, inorganic phosphate and arabinose 5-phosphate. Functionally, catalyzes the reversible formation of fructose 6-phosphate from dihydroxyacetone (DHA) and D-glyceraldehyde 3-phosphate via an aldolization reaction. Can utilize several aldehydes as acceptor compounds in vitro, and hydroxyacetone (HA) or 1-hydroxy-butan-2-one as alternative donor substrate. Is also able to catalyze the direct stereoselective self-aldol addition of glycolaldehyde to furnish D-(-)-threose, and cross-aldol reactions of glycolaldehyde to other aldehyde acceptors. Is not able to cleave fructose, fructose 1-phosphate, glucose 6-phosphate, sedoheptulose 1,7-bisphosphate, xylulose 5-phosphate, ribulose 5-phosphate, and fructose 1,6-bisphosphate; cannot use dihydroxyacetone phosphate as donor compound nor D-glyceraldehyde as acceptor. Does not display transaldolase activity. This chain is Fructose-6-phosphate aldolase 1 (fsaA), found in Escherichia coli (strain K12).